A 163-amino-acid chain; its full sequence is Cyanate hydratase (163 aa).

Catalysis depends on residues Arg103, Glu106, and Ser129.

Belongs to the cyanase family.

The catalysed reaction is cyanate + hydrogencarbonate + 3 H(+) = NH4(+) + 2 CO2. Functionally, catalyzes the reaction of cyanate with bicarbonate to produce ammonia and carbon dioxide. The chain is Cyanate hydratase from Talaromyces stipitatus (strain ATCC 10500 / CBS 375.48 / QM 6759 / NRRL 1006) (Penicillium stipitatum).